The following is a 599-amino-acid chain: Elongation factor 4 (599 aa).

The region spanning Lys2 to Glu184 is the tr-type G domain. Residues Asp14–Thr19 and Asn131–Asp134 each bind GTP.

Belongs to the TRAFAC class translation factor GTPase superfamily. Classic translation factor GTPase family. LepA subfamily.

The protein localises to the cell inner membrane. The enzyme catalyses GTP + H2O = GDP + phosphate + H(+). Functionally, required for accurate and efficient protein synthesis under certain stress conditions. May act as a fidelity factor of the translation reaction, by catalyzing a one-codon backward translocation of tRNAs on improperly translocated ribosomes. Back-translocation proceeds from a post-translocation (POST) complex to a pre-translocation (PRE) complex, thus giving elongation factor G a second chance to translocate the tRNAs correctly. Binds to ribosomes in a GTP-dependent manner. The polypeptide is Elongation factor 4 (Escherichia fergusonii (strain ATCC 35469 / DSM 13698 / CCUG 18766 / IAM 14443 / JCM 21226 / LMG 7866 / NBRC 102419 / NCTC 12128 / CDC 0568-73)).